A 796-amino-acid polypeptide reads, in one-letter code: Protein translocase subunit SecA 2 (796 aa).

Residues Gln84, 102–106 (GEGKT), and Asp496 each bind ATP.

The protein belongs to the SecA family. As to quaternary structure, monomer and homodimer. Part of the essential Sec protein translocation apparatus which comprises SecA, SecYEG and auxiliary proteins SecDF. Other proteins may also be involved.

Its subcellular location is the cell membrane. It is found in the cytoplasm. It catalyses the reaction ATP + H2O + cellular proteinSide 1 = ADP + phosphate + cellular proteinSide 2.. Its function is as follows. Part of the Sec protein translocase complex. Interacts with the SecYEG preprotein conducting channel. Has a central role in coupling the hydrolysis of ATP to the transfer of proteins into and across the cell membrane, serving as an ATP-driven molecular motor driving the stepwise translocation of polypeptide chains across the membrane. This chain is Protein translocase subunit SecA 2, found in Staphylococcus aureus (strain Mu3 / ATCC 700698).